We begin with the raw amino-acid sequence, 185 residues long: Peptide deformylase (185 aa).

Residues Cys109 and His152 each contribute to the Fe cation site. Residue Glu153 is part of the active site. His156 provides a ligand contact to Fe cation.

Belongs to the polypeptide deformylase family. Fe(2+) serves as cofactor.

The catalysed reaction is N-terminal N-formyl-L-methionyl-[peptide] + H2O = N-terminal L-methionyl-[peptide] + formate. Removes the formyl group from the N-terminal Met of newly synthesized proteins. Requires at least a dipeptide for an efficient rate of reaction. N-terminal L-methionine is a prerequisite for activity but the enzyme has broad specificity at other positions. This is Peptide deformylase from Roseiflexus sp. (strain RS-1).